The sequence spans 384 residues: 1-deoxy-D-xylulose 5-phosphate reductoisomerase (384 aa).

Positions 10, 11, 12, 13, 36, 38, and 122 each coordinate NADPH. Position 123 (Lys-123) interacts with 1-deoxy-D-xylulose 5-phosphate. Position 124 (Glu-124) interacts with NADPH. Asp-148 is a binding site for Mn(2+). Residues Ser-149, Glu-150, Ser-174, and His-197 each coordinate 1-deoxy-D-xylulose 5-phosphate. Glu-150 is a Mn(2+) binding site. Residue Gly-203 participates in NADPH binding. Residues Ser-210, Asn-215, Lys-216, and Glu-219 each coordinate 1-deoxy-D-xylulose 5-phosphate. Glu-219 lines the Mn(2+) pocket.

This sequence belongs to the DXR family. Requires Mg(2+) as cofactor. The cofactor is Mn(2+).

It catalyses the reaction 2-C-methyl-D-erythritol 4-phosphate + NADP(+) = 1-deoxy-D-xylulose 5-phosphate + NADPH + H(+). The protein operates within isoprenoid biosynthesis; isopentenyl diphosphate biosynthesis via DXP pathway; isopentenyl diphosphate from 1-deoxy-D-xylulose 5-phosphate: step 1/6. Catalyzes the NADPH-dependent rearrangement and reduction of 1-deoxy-D-xylulose-5-phosphate (DXP) to 2-C-methyl-D-erythritol 4-phosphate (MEP). This Geobacter metallireducens (strain ATCC 53774 / DSM 7210 / GS-15) protein is 1-deoxy-D-xylulose 5-phosphate reductoisomerase.